Consider the following 129-residue polypeptide: Lysozyme C (129 aa).

The 129-residue stretch at 1–129 (KIYKRCELAA…VSTWIKDCKL (129 aa)) folds into the C-type lysozyme domain. 4 disulfides stabilise this stretch: cysteine 6–cysteine 127, cysteine 30–cysteine 115, cysteine 64–cysteine 80, and cysteine 76–cysteine 94. Active-site residues include glutamate 35 and aspartate 52.

This sequence belongs to the glycosyl hydrolase 22 family. In terms of assembly, monomer.

The protein resides in the secreted. It catalyses the reaction Hydrolysis of (1-&gt;4)-beta-linkages between N-acetylmuramic acid and N-acetyl-D-glucosamine residues in a peptidoglycan and between N-acetyl-D-glucosamine residues in chitodextrins.. Functionally, lysozymes have primarily a bacteriolytic function; those in tissues and body fluids are associated with the monocyte-macrophage system and enhance the activity of immunoagents. The sequence is that of Lysozyme C (LYZ) from Ortalis vetula (Plain chachalaca).